Consider the following 227-residue polypeptide: Cytochrome c oxidase subunit 2 (227 aa).

The Mitochondrial intermembrane portion of the chain corresponds to 1–14 (MAYPFQLGLQDATS). A helical membrane pass occupies residues 15-45 (PIMEELMNFHDHTLMIVFLISTLVLYIISLM). Residues 46–59 (LTTKLTHTSTMDAQ) lie on the Mitochondrial matrix side of the membrane. The chain crosses the membrane as a helical span at residues 60-87 (EVETVWTILPAVILIMIALPSLRILYMM). The Mitochondrial intermembrane portion of the chain corresponds to 88–227 (DEINNPVLTV…HFENWSTSMI (140 aa)). His161, Cys196, Glu198, Cys200, His204, and Met207 together coordinate Cu cation. Glu198 provides a ligand contact to Mg(2+).

The protein belongs to the cytochrome c oxidase subunit 2 family. Component of the cytochrome c oxidase (complex IV, CIV), a multisubunit enzyme composed of 14 subunits. The complex is composed of a catalytic core of 3 subunits MT-CO1, MT-CO2 and MT-CO3, encoded in the mitochondrial DNA, and 11 supernumerary subunits COX4I, COX5A, COX5B, COX6A, COX6B, COX6C, COX7A, COX7B, COX7C, COX8 and NDUFA4, which are encoded in the nuclear genome. The complex exists as a monomer or a dimer and forms supercomplexes (SCs) in the inner mitochondrial membrane with NADH-ubiquinone oxidoreductase (complex I, CI) and ubiquinol-cytochrome c oxidoreductase (cytochrome b-c1 complex, complex III, CIII), resulting in different assemblies (supercomplex SCI(1)III(2)IV(1) and megacomplex MCI(2)III(2)IV(2)). Found in a complex with TMEM177, COA6, COX18, COX20, SCO1 and SCO2. Interacts with TMEM177 in a COX20-dependent manner. Interacts with COX20. Interacts with COX16. Requires Cu cation as cofactor.

The protein resides in the mitochondrion inner membrane. It catalyses the reaction 4 Fe(II)-[cytochrome c] + O2 + 8 H(+)(in) = 4 Fe(III)-[cytochrome c] + 2 H2O + 4 H(+)(out). Functionally, component of the cytochrome c oxidase, the last enzyme in the mitochondrial electron transport chain which drives oxidative phosphorylation. The respiratory chain contains 3 multisubunit complexes succinate dehydrogenase (complex II, CII), ubiquinol-cytochrome c oxidoreductase (cytochrome b-c1 complex, complex III, CIII) and cytochrome c oxidase (complex IV, CIV), that cooperate to transfer electrons derived from NADH and succinate to molecular oxygen, creating an electrochemical gradient over the inner membrane that drives transmembrane transport and the ATP synthase. Cytochrome c oxidase is the component of the respiratory chain that catalyzes the reduction of oxygen to water. Electrons originating from reduced cytochrome c in the intermembrane space (IMS) are transferred via the dinuclear copper A center (CU(A)) of subunit 2 and heme A of subunit 1 to the active site in subunit 1, a binuclear center (BNC) formed by heme A3 and copper B (CU(B)). The BNC reduces molecular oxygen to 2 water molecules using 4 electrons from cytochrome c in the IMS and 4 protons from the mitochondrial matrix. This Apodemus semotus (Taiwan field mouse) protein is Cytochrome c oxidase subunit 2 (MT-CO2).